Consider the following 300-residue polypeptide: Regulatory protein NocR (300 aa).

In terms of domain architecture, HTH lysR-type spans 1–59 (MIQSRQLEAFRPVMLTGGMTSAANLVRITQPAISRLIRDLEEEIGISLFERTGNRLRPT). A DNA-binding region (H-T-H motif) is located at residues 19–38 (MTSAANLVRITQPAISRLIR).

It belongs to the LysR transcriptional regulatory family.

Functionally, positive regulatory protein for the noc operon involved in nopaline catabolism and uptake. The chain is Regulatory protein NocR (nocR) from Agrobacterium tumefaciens (strain T37).